We begin with the raw amino-acid sequence, 289 residues long: Ketose 3-epimerase (289 aa).

Residue Glu146 is the Proton donor/acceptor of the active site. A Mn(2+)-binding site is contributed by Glu146. Substrate-binding positions include Glu152 and 179-182 (DTYH). Mn(2+) is bound by residues Asp179 and His205. Residue Arg211 participates in substrate binding. The active-site Proton donor/acceptor is Glu240. Glu240 is a binding site for Mn(2+).

The protein belongs to the hyi family. As to quaternary structure, homotetramer. Mg(2+) is required as a cofactor. Requires Mn(2+) as cofactor. It depends on Co(2+) as a cofactor.

It catalyses the reaction L-ribulose = L-xylulose. The enzyme catalyses D-allulose = keto-D-fructose. The catalysed reaction is keto-L-tagatose = keto-L-sorbose. It carries out the reaction D-ribulose = D-xylulose. It catalyses the reaction L-allulose = keto-L-fructose. The enzyme catalyses keto-D-tagatose = keto-D-sorbose. Functionally, catalyzes the reversible C-3 epimerization of several ketoses. Shows the highest enzymatic activity for the epimerization of L-ribulose to L-xylulose. Is also able to convert D-allulose (also known as D-psicose) to D-fructose and, to a lesser extent, L-tagatose to L-sorbose, D-ribulose to D-xylulose, L-allulose to L-fructose and D-tagatose to D-sorbose. The polypeptide is Ketose 3-epimerase (Arthrobacter globiformis).